We begin with the raw amino-acid sequence, 2610 residues long: E3 ubiquitin-protein ligase HECTD1 (2610 aa).

The tract at residues 246-269 (TVSGPSSACKPGRSTTGAPSTTAD) is disordered. Residues 258-269 (RSTTGAPSTTAD) show a composition bias toward polar residues. ANK repeat units follow at residues 395-424 (VGQT…DVNR), 426-455 (QRSS…NPDL), 459-491 (DGKT…PVNK), and 579-612 (ITAT…DIFL). A disordered region spans residues 489–513 (VNKGDDKKKKDTNKDEEECNEPKGD). The span at 491-501 (KGDDKKKKDTN) shows a compositional bias: basic and acidic residues. 2 disordered regions span residues 627–657 (LAGP…ELQQ) and 707–748 (SSGS…LSAP). Phosphoserine occurs at positions 631 and 640. Residues 639–657 (ESKPEKEDEPQEDAKELQQ) are compositionally biased toward basic and acidic residues. Residues 707–717 (SSGSPEGGSDS) are compositionally biased toward low complexity. Positions 718-729 (SESRSEFLEKLQ) are enriched in basic and acidic residues. Positions 1266–1338 (VRSQVLKYMV…KFDLKLAPGY (73 aa)) constitute an MIB/HERC2 domain. 2 disordered regions span residues 1343 to 1406 (VASP…KTER) and 1433 to 1483 (ENVP…SMGI). The span at 1348–1365 (PVSSTVSGTTQSWSSLVK) shows a compositional bias: polar residues. 2 stretches are compositionally biased toward low complexity: residues 1373 to 1395 (SAAA…ASSS) and 1441 to 1458 (GSSS…TGSE). At Ser-1384 the chain carries Phosphoserine. A compositionally biased stretch (polar residues) spans 1469 to 1479 (SVRTPGESSAI). Ser-1488 is subject to Phosphoserine. The disordered stretch occupies residues 1496–1515 (ELTNKEAASQRPLSSSASNR). At Ser-1567 the chain carries Phosphoserine. 2 disordered regions span residues 1592 to 1611 (GAQS…VTMS) and 1674 to 1757 (ELDD…KGGR). Residues 1600-1611 (TTPGTTSTVTMS) show a composition bias toward low complexity. A compositionally biased stretch (acidic residues) spans 1674–1703 (ELDDDEDLPEPDEEDDENEDDNQEDQEYEE). Thr-1760 carries the post-translational modification Phosphothreonine. Residue Ser-1772 is modified to Phosphoserine. A disordered region spans residues 1777-1797 (AFDPRPGRTNVQQTTDLEIPP). The tract at residues 2029 to 2103 (FTFPPDEFTS…AIVWLQNRRE (75 aa)) is K-box. The region spanning 2151–2610 (IHADRKSVLE…ATMEKGFHLN (460 aa)) is the HECT domain. The disordered stretch occupies residues 2297–2318 (HCTESQSEASTEEGHDSLSVGS). At Ser-2318 the chain carries Phosphoserine. Residue Cys-2579 is the Glycyl thioester intermediate of the active site.

This sequence belongs to the UPL family. K-HECT subfamily. In terms of assembly, interacts with IGSF1.

The catalysed reaction is S-ubiquitinyl-[E2 ubiquitin-conjugating enzyme]-L-cysteine + [acceptor protein]-L-lysine = [E2 ubiquitin-conjugating enzyme]-L-cysteine + N(6)-ubiquitinyl-[acceptor protein]-L-lysine.. It functions in the pathway protein modification; protein ubiquitination. Its function is as follows. E3 ubiquitin-protein ligase which accepts ubiquitin from an E2 ubiquitin-conjugating enzyme in the form of a thioester and then directly transfers the ubiquitin to targeted substrates. Mediates 'Lys-63'-linked polyubiquitination of HSP90AA1 which leads to its intracellular localization and reduced secretion. Negatively regulating HSP90AA1 secretion in cranial mesenchyme cells may impair their emigration and may be essential for the correct development of the cranial neural folds and neural tube closure. Catalyzes ubiquitination and degradation of ZNF622, an assembly factor for the ribosomal 60S subunit, in hematopoietic cells, thereby promoting hematopoietic stem cell renewal. In Homo sapiens (Human), this protein is E3 ubiquitin-protein ligase HECTD1.